Consider the following 2586-residue polypeptide: MGVIESPSSTTSGSAEEMAQAITGHEDSVLPVAIVGMGMRLPGGIHTPDELWGMLVEKRSTRCEIPPTRFSVDGFHSPSSKPGSIAMRHGHFLDDKDDLHRLDTSFFSMGMTEVSDIDPQQRMLLEVAYECMQSSGQTNWRGSNIGCYVGVWGEDWLDLHSKDLYDSGTYRVSGGHDFAISNRISYEYDLKGPSFTIKAGCSSSLIALHEAVRAIRAGDCDGAIVAGTNLVFSPTMSVAMTEQGVLSPDASCKTFDANANGYARGEAINAIFLKPLNNALREGDPIRALVRATSSNSDGKTPGMSMPSSESHEALIRRAYGEVFLDPKDTCFVEAHGTGTSVGDPLEATAIARVFGGSSDNKLYIGSVKPNLGHSEGASGVSSVMKAVLALENRTIPPNINFSTPNPKIPFSEMNMAVPVDAIPWPRDRPLRVSVNSFGIGGANAHCIIETLEEYLGRSLPNESQVAPIRNGNGSVQADSSSAVTSITAMKMEVRRKKRQSAVEAAGLVSNLRLVADSTKIRPSKALYVLSAANPTSLRQSVMDYQKYLASHKTDPVDVSYTLANRREHLSHRTYGVVTTESTNDTPIVPDFSPLSKTNNNSLPEINMIFTGQGAQWVGMGKELMDEYETFYNTIAYLGLVLSGLEHPPTWDLIRELSRPAESSNVGRAEFSQPLVCAVQVALVDLLRSWGITPAAVVGHSSGEMAAAYAAGAISSEEAITIAYYRGYVNQQYTRDGGMAAIGMGAQEVAPYLVEGVGVACENSPQSVTLSGDKGVLEEVCQKIKEQVPDCFVRQLKVNVAYHSHHMQDLGGLFENLLEGKVYSQSPTIPFFSSVTVQKITEPRSLDAAYWRQNLESPVRFTGAVKLLLEARASTGSKQVFVEIGPHSALSGPLRQIFKAHGRGKEAYVSAMIRGEDCTESLLKLAGELFCHGTSLQLSNVTADGDVVVDLPPYPWNHDREYWSESRVSKDWRFRKFPNHELLGSRTLESSSLQPEWRNLIRLDGIPWLRDHQVLNDVVFPCAGYLAMAVEAVRQVAGTSEIGGFTLKSVVVQSALVLTESKPVEVLTSLRPVRLTNTLDSAWWEFSIVAHNGTSWIKHCEGQVRPGQDAHQKTAVLPQSEPISQHYPRLVDNLYPELLRIGLRYGPSFRGLDNVSCVPNGKKAAAMLRETTVSESSYAIHPTTIDHCLQLFFPASCDGAFYRAEKLCVPTAIGRLYLADGKSCEVESARAEASAATNSGGSISGAATVVSKQNSTLLSLEDGKFSPLEMDLAEDGNADLVGTARLEWKPNLDFADMCSLVRPSHASMNDGPELDLVEQLTLLAILEIHERIDGAVTPGGHDHAHQHIPNFRGWIADQVTAAAEGRYRGVVADAREIASLERGARLSLMTNLRQQVLRTGAASAAVLIGRVVDHCEEIVKGELEGIELLQAEDGLTNYYNYVESRTDSIDFFATAGHTRPTLRVLEIGAGTGGGAQVILEGLTNGKERLFSTYAYTDISAGFFVAAQERFKAYKGLDFKVLDITKDPSEQGFESGSFDLIIAGNVIHATPTLNETLANVRKLLAPEGYLFLQELSPKMRMVNLIMGILPGWWLGAAEGRVEEPYLDPSQWDTVLKETGFSGVDSAIYDAPYPYHLNANIISRPAKESAPQPRAIRGRLTLLHHADDTNSSSITQLREVLDARGLETDMVVFHEHEELKAGEQDVIISLLELKKPFFSSISAAQLESFQRIVAKLGSIEMIWVTRPAQHGLSASDNPGFGLSLGLTRTLRSEQSLAITTLEIDQVNDESFKAVTNLAIKVLDHREGGSTESTRGATTMDPDREYVVENGVVKVARYHPVSLSQELASRASKPEAVTLEIGRMGLLQTLGWVPFPTSDPGYGEVTIEPRCAGLNFRDVLLCMGVVEATGVGIGLEGSGIITKVGAGVGKFQPGDPVFYLADNCFSTQITISAQRCAKIPSQLAFEDAATMPCVYATVIHSLLDVGGLRPGQSILIHSACGGIGIAALNLCRNFQGLEIYTTVGNEEKVQYLVDNFGLPRSRIFNSRDASFLYDVRAATQGRGVDLVLNSLSGDLLHASWQCVAPYGKMLEIGKRDFIGKARLEMDLFEANRSFIGIDLARFDSARCQKLLERTAAMIQTGIVQPIKPVKVFDASDAEGAFRYMQKGVHLGKIVVSIPPHSSTALPITPKPLQVKLNPEASYLLVGGLGGLGRAAATWMVESGARYLIFFSRSAGLSVRDQAFFQELASQGCTAQAVRGDVLNLADVELAMASAPPGKPIRGVLQMSMVLRDKPFADMSLEDWDTAVKPKVHGTWNLHLAAPKDLDFFFATGSISGSFGTPGQANYAAGNTYLTALFEHRRALGLPASVLQIGLIEDIGYLAKNPERAEALRAAGGFFLRTRQLLQGLNWALLSSDPHHPEYQLTIGLRSDKALSDPANRVIWKKDSRAALYHNQEISTDAGAGDDQGINAIRLLVASCEEDPGILEDPATVELVTNEIGKRVCMFMLRPVEEMDPTASLTSLGVDSLVTIEIRNWIKRTFGGVEVSTLEILNSGTIQGLARLTVDGLKARFAASEQTDGDAYLEMKAP.

In terms of domain architecture, Ketosynthase family 3 (KS3) spans 29-451 (VLPVAIVGMG…GANAHCIIET (423 aa)). Residues cysteine 201, histidine 336, and histidine 374 each act as for beta-ketoacyl synthase activity in the active site. The tract at residues 609 to 928 (IFTGQGAQWV…TESLLKLAGE (320 aa)) is malonyl-CoA:ACP transacylase (MAT) domain. Residues 980-1111 (HELLGSRTLE…GQVRPGQDAH (132 aa)) form an N-terminal hotdog fold region. A dehydratase (DH) domain region spans residues 980-1269 (HELLGSRTLE…LEDGKFSPLE (290 aa)). Positions 980–1274 (HELLGSRTLE…FSPLEMDLAE (295 aa)) constitute a PKS/mFAS DH domain. Histidine 1012 (proton acceptor; for dehydratase activity) is an active-site residue. Residues 1125-1274 (QHYPRLVDNL…FSPLEMDLAE (150 aa)) are C-terminal hotdog fold. Aspartate 1186 serves as the catalytic Proton donor; for dehydratase activity. The tract at residues 1450–1627 (DFFATAGHTR…GFSGVDSAIY (178 aa)) is methyltransferase (CMet) domain. Positions 1862–2172 (GLLQTLGWVP…KGVHLGKIVV (311 aa)) are enoyl reductase (ER) (ER) domain. Residues 2197 to 2373 (ASYLLVGGLG…ASVLQIGLIE (177 aa)) are ketoreductase (KR) domain. One can recognise a Carrier domain in the interval 2486-2565 (PATVELVTNE…GLARLTVDGL (80 aa)). At serine 2524 the chain carries O-(pantetheine 4'-phosphoryl)serine.

Its pathway is mycotoxin biosynthesis. Functionally, highly reducing polyketide synthase; part of the gene cluster that mediates the biosynthesis of fumonisins B1 (FB1), B2 (FB2), B3 (FB3), and B4 (FB4), which are carcinogenic mycotoxins. The biosynthesis starts with the FUM1-catalyzed carbon chain assembly from one molecule of acetyl-CoA, eight molecules of malonyl-CoA, and two molecules of methionine (in S-adenosyl form). The C18 polyketide chain is released from the enzyme by a nucleophilic attack of a carbanion, which is derived from R-carbon of alanine by decarboxylation, on the carbonyl carbon of polyketide acyl chain. This step is catalyzed by the pyridoxal 5'-phosphate-dependent aminoacyl transferase FUM8. The resultant 3-keto intermediate is then stereospecifically reduced to a 3-hydroxyl product by reductase FUM13. Subsequent oxidations at C-10 by the cytochrome P450 monooxygenase FUM2, C-14 and C-15 by FUM6, FUM12 or FUM15, tricarballylic esterification of the hydroxyl groups on C-14 and C-15 by acyltransferase FUM14, and C-5 hydroxylation by 2-keto-glutarate-dependent dioxygenase FUM3 furnish the biosynthesis of fumonisins. The tricarballylic moieties are most likely derived from the citric acid cycle, and their addition to the carbon backbone may involve FUM7, FUM10, FUM11 and FUM14. The chain is Highly reducing polyketide synthase FUM1 from Gibberella moniliformis (strain M3125 / FGSC 7600) (Maize ear and stalk rot fungus).